Consider the following 1036-residue polypeptide: Phospholipase D1 (1036 aa).

In terms of domain architecture, PX spans 81–212; sequence IKAQVLEVER…TEFLDVSQLS (132 aa). Residues 219 to 328 enclose the PH domain; sequence PKGLEGMIMK…WGGAIEEFIQ (110 aa). 2 S-palmitoyl cysteine lipidation sites follow: Cys-240 and Cys-241. Residues 459 to 486 enclose the PLD phosphodiesterase 1 domain; that stretch reads YLWAHHEKLVIIDQSVAFVGGIDLAYGR. The interval 463-890 is catalytic; it reads HHEKLVIIDQ…MLGKRDSEMA (428 aa). Ser-499, Ser-561, and Ser-591 each carry phosphoserine. In terms of domain architecture, PLD phosphodiesterase 2 spans 853–880; the sequence is ELIYVHSKLLIADDNTVIIGSANINDRS.

The protein belongs to the phospholipase D family. As to quaternary structure, interacts with PIP5K1B.

It is found in the cytoplasm. It localises to the perinuclear region. Its subcellular location is the endoplasmic reticulum membrane. The protein resides in the golgi apparatus membrane. The protein localises to the late endosome membrane. It catalyses the reaction a 1,2-diacyl-sn-glycero-3-phosphocholine + H2O = a 1,2-diacyl-sn-glycero-3-phosphate + choline + H(+). Its activity is regulated as follows. Stimulated by phosphatidylinositol 4,5-bisphosphate and phosphatidylinositol 3,4,5-trisphosphate, activated by the phosphokinase C-alpha, by the ADP-ribosylation factor-1 (ARF-1), and to a lesser extent by GTP-binding proteins: RHO A, RAC-1 and CDC42. Its function is as follows. Implicated as a critical step in numerous cellular pathways, including signal transduction, membrane trafficking, and the regulation of mitosis. May be involved in the regulation of perinuclear intravesicular membrane traffic. This chain is Phospholipase D1 (PLD1), found in Cricetulus griseus (Chinese hamster).